The chain runs to 366 residues: Small ribosomal subunit biogenesis GTPase RsgA (366 aa).

In terms of domain architecture, CP-type G spans 107–266 (RSEGQILAAN…LIDTPGLRGV (160 aa)). GTP is bound by residues 154 to 157 (TKAD) and 208 to 216 (GQSGAGKST). C289, C294, H296, and C302 together coordinate Zn(2+).

Belongs to the TRAFAC class YlqF/YawG GTPase family. RsgA subfamily. As to quaternary structure, monomer. Associates with 30S ribosomal subunit, binds 16S rRNA. The cofactor is Zn(2+).

It localises to the cytoplasm. One of several proteins that assist in the late maturation steps of the functional core of the 30S ribosomal subunit. Helps release RbfA from mature subunits. May play a role in the assembly of ribosomal proteins into the subunit. Circularly permuted GTPase that catalyzes slow GTP hydrolysis, GTPase activity is stimulated by the 30S ribosomal subunit. The chain is Small ribosomal subunit biogenesis GTPase RsgA from Streptomyces coelicolor (strain ATCC BAA-471 / A3(2) / M145).